Here is a 95-residue protein sequence, read N- to C-terminus: MAVFLIAYDLVNERRGTHDYQPLWDELKRLGAHRTQFSLWLVSANNTTAEVRQHFQQFVDSNDRIWVTRLRKSQYDYANAIGGTNNWLSNNPPEA.

D9 is a Mg(2+) binding site.

This sequence belongs to the CRISPR-associated endoribonuclease Cas2 protein family. In terms of assembly, homodimer, forms a heterotetramer with a Cas1 homodimer. Mg(2+) is required as a cofactor.

CRISPR (clustered regularly interspaced short palindromic repeat), is an adaptive immune system that provides protection against mobile genetic elements (viruses, transposable elements and conjugative plasmids). CRISPR clusters contain sequences complementary to antecedent mobile elements and target invading nucleic acids. CRISPR clusters are transcribed and processed into CRISPR RNA (crRNA). Functions as a ssRNA-specific endoribonuclease. Involved in the integration of spacer DNA into the CRISPR cassette. The sequence is that of CRISPR-associated endoribonuclease Cas2 from Methylorubrum extorquens (strain CM4 / NCIMB 13688) (Methylobacterium extorquens).